Reading from the N-terminus, the 236-residue chain is Orotidine 5'-phosphate decarboxylase (236 aa).

Residues Asp11, Lys33, 60–69, Thr119, Arg181, Gln190, Gly210, and Arg211 contribute to the substrate site; that span reads DLKLHDIPNT. Catalysis depends on Lys62, which acts as the Proton donor.

This sequence belongs to the OMP decarboxylase family. Type 1 subfamily. As to quaternary structure, homodimer.

It carries out the reaction orotidine 5'-phosphate + H(+) = UMP + CO2. The protein operates within pyrimidine metabolism; UMP biosynthesis via de novo pathway; UMP from orotate: step 2/2. Functionally, catalyzes the decarboxylation of orotidine 5'-monophosphate (OMP) to uridine 5'-monophosphate (UMP). The polypeptide is Orotidine 5'-phosphate decarboxylase (Cutibacterium acnes (strain DSM 16379 / KPA171202) (Propionibacterium acnes)).